The sequence spans 548 residues: Probable malate:quinone oxidoreductase (548 aa).

The protein belongs to the MQO family. The cofactor is FAD.

It catalyses the reaction (S)-malate + a quinone = a quinol + oxaloacetate. It participates in carbohydrate metabolism; tricarboxylic acid cycle; oxaloacetate from (S)-malate (quinone route): step 1/1. The protein is Probable malate:quinone oxidoreductase of Escherichia coli (strain SE11).